A 487-amino-acid chain; its full sequence is ATP-dependent 6-phosphofructokinase (487 aa).

ATP-binding positions include Gly-107, 173-174 (RG), 198-201 (GDGT), and Lys-226. Asp-199 serves as a coordination point for Mg(2+). Substrate contacts are provided by residues 227–229 (TID), 272–274 (MGR), and Glu-325. Asp-229 serves as the catalytic Proton acceptor. 341-343 (SGN) contacts ATP. 380–383 (YMIR) contacts substrate. The short motif at 485–487 (AKL) is the Peroxisomal targeting signal element.

This sequence belongs to the phosphofructokinase type A (PFKA) family. PPi-dependent PFK group II subfamily. Atypical ATP-dependent clade 'X' sub-subfamily. In terms of assembly, homotetramer. Requires Mg(2+) as cofactor.

The protein localises to the glycosome. The catalysed reaction is beta-D-fructose 6-phosphate + ATP = beta-D-fructose 1,6-bisphosphate + ADP + H(+). It participates in carbohydrate degradation; glycolysis; D-glyceraldehyde 3-phosphate and glycerone phosphate from D-glucose: step 3/4. With respect to regulation, allosterically activated by AMP. Its function is as follows. Catalyzes the phosphorylation of D-fructose 6-phosphate to fructose 1,6-bisphosphate by ATP, the first committing step of glycolysis. In Trypanosoma brucei brucei, this protein is ATP-dependent 6-phosphofructokinase.